The primary structure comprises 445 residues: Exodeoxyribonuclease 7 large subunit (445 aa).

This sequence belongs to the XseA family. As to quaternary structure, heterooligomer composed of large and small subunits.

The protein resides in the cytoplasm. It catalyses the reaction Exonucleolytic cleavage in either 5'- to 3'- or 3'- to 5'-direction to yield nucleoside 5'-phosphates.. Its function is as follows. Bidirectionally degrades single-stranded DNA into large acid-insoluble oligonucleotides, which are then degraded further into small acid-soluble oligonucleotides. The sequence is that of Exodeoxyribonuclease 7 large subunit from Staphylococcus epidermidis (strain ATCC 12228 / FDA PCI 1200).